The primary structure comprises 146 residues: MNMFFDWWFATSPRLRQLCWAFWLLMLVTLIFLSSTHHEERDALIRLRASHHQQWAALYRLVDTAPFSEEKTLPFSPLDFQLSGAQLVSWHPSAQGGELALKTLWEAVPSAFTRLAERNVSVSRFSLSVEGDDLLFTLQLETPHEG.

The chain crosses the membrane as a helical span at residues 20–37; the sequence is WAFWLLMLVTLIFLSSTH.

Its subcellular location is the cell inner membrane. Its function is as follows. Required for the use of extracellular DNA as a nutrient. The chain is DNA utilization protein HofO (hofO) from Escherichia coli (strain K12).